The primary structure comprises 454 residues: UPF0210 protein Mlab_1030 (454 aa).

The protein belongs to the UPF0210 family.

The chain is UPF0210 protein Mlab_1030 from Methanocorpusculum labreanum (strain ATCC 43576 / DSM 4855 / Z).